Consider the following 282-residue polypeptide: S-formylglutathione hydrolase (282 aa).

Position 4 is an N6-succinyllysine (Lys4). Residue Ser149 is the Charge relay system of the active site. The residue at position 200 (Lys200) is an N6-acetyllysine. Active-site charge relay system residues include Asp226 and His260.

Belongs to the esterase D family. As to quaternary structure, homodimer.

The protein localises to the cytoplasm. Its subcellular location is the cytoplasmic vesicle. The catalysed reaction is S-formylglutathione + H2O = formate + glutathione + H(+). Functionally, serine hydrolase involved in the detoxification of formaldehyde. This is S-formylglutathione hydrolase (Esd) from Rattus norvegicus (Rat).